A 304-amino-acid chain; its full sequence is RING-H2 finger protein ATL2 (304 aa).

Residues 30 to 50 traverse the membrane as a helical segment; it reads IMLSAIVILFFVVILMVFLHL. The RING-type; atypical zinc finger occupies 119–161; that stretch reads CAVCLSEFEESETGRVLPNCQHTFHVDCIDMWFHSHSTCPLCR. The disordered stretch occupies residues 194 to 304; that stretch reads EPSSSSGLTD…DIERGGEESR (111 aa). A compositionally biased stretch (basic and acidic residues) spans 227 to 244; it reads VPRRTFSEFEDELTRRDS. The span at 283–293 shows a compositional bias: polar residues; that stretch reads PTLSCRIQMTE. Residues 295-304 are compositionally biased toward basic and acidic residues; that stretch reads DIERGGEESR.

It belongs to the RING-type zinc finger family. ATL subfamily. As to expression, preferentially expressed around the apical meristem region.

The protein localises to the membrane. The catalysed reaction is S-ubiquitinyl-[E2 ubiquitin-conjugating enzyme]-L-cysteine + [acceptor protein]-L-lysine = [E2 ubiquitin-conjugating enzyme]-L-cysteine + N(6)-ubiquitinyl-[acceptor protein]-L-lysine.. Its pathway is protein modification; protein ubiquitination. Functionally, may be involved in the early steps of the plant defense signaling pathway. This is RING-H2 finger protein ATL2 (ATL2) from Arabidopsis thaliana (Mouse-ear cress).